We begin with the raw amino-acid sequence, 320 residues long: Cytochrome f (320 aa).

Residues 1 to 35 (MQNRNTFSWVKEPINRSISVLIIIYVITQTSISNA) form the signal peptide. Residues Tyr-36, Cys-56, Cys-59, and His-60 each contribute to the heme site. Residues 286–306 (VQGLLFFLASVTLAQIFLVLK) form a helical membrane-spanning segment.

This sequence belongs to the cytochrome f family. As to quaternary structure, the 4 large subunits of the cytochrome b6-f complex are cytochrome b6, subunit IV (17 kDa polypeptide, petD), cytochrome f and the Rieske protein, while the 4 small subunits are PetG, PetL, PetM and PetN. The complex functions as a dimer. The cofactor is heme.

It localises to the plastid. Its subcellular location is the chloroplast thylakoid membrane. In terms of biological role, component of the cytochrome b6-f complex, which mediates electron transfer between photosystem II (PSII) and photosystem I (PSI), cyclic electron flow around PSI, and state transitions. The chain is Cytochrome f from Piper cenocladum (Ant piper).